A 447-amino-acid polypeptide reads, in one-letter code: Tubulin beta-6 chain (447 aa).

GTP is bound by residues Q11, E69, S138, G142, T143, G144, N204, and N226. E69 contributes to the Mg(2+) binding site. Positions 426–447 (QDATAEEEGEFDEDEELDDGMM) are disordered. Acidic residues predominate over residues 429 to 447 (TAEEEGEFDEDEELDDGMM).

Belongs to the tubulin family. In terms of assembly, dimer of alpha and beta chains. A typical microtubule is a hollow water-filled tube with an outer diameter of 25 nm and an inner diameter of 15 nM. Alpha-beta heterodimers associate head-to-tail to form protofilaments running lengthwise along the microtubule wall with the beta-tubulin subunit facing the microtubule plus end conferring a structural polarity. Microtubules usually have 13 protofilaments but different protofilament numbers can be found in some organisms and specialized cells. The cofactor is Mg(2+).

It localises to the cytoplasm. Its subcellular location is the cytoskeleton. Functionally, tubulin is the major constituent of microtubules, a cylinder consisting of laterally associated linear protofilaments composed of alpha- and beta-tubulin heterodimers. Microtubules grow by the addition of GTP-tubulin dimers to the microtubule end, where a stabilizing cap forms. Below the cap, tubulin dimers are in GDP-bound state, owing to GTPase activity of alpha-tubulin. The protein is Tubulin beta-6 chain (TUBB6) of Ectocarpus variabilis (Brown alga).